We begin with the raw amino-acid sequence, 212 residues long: High frequency lysogenization protein HflD homolog (212 aa).

Belongs to the HflD family.

It is found in the cytoplasm. The protein resides in the cell inner membrane. The protein is High frequency lysogenization protein HflD homolog of Stutzerimonas stutzeri (strain A1501) (Pseudomonas stutzeri).